The following is a 123-amino-acid chain: MYAYTVIAFLAASVAAAGNGPSISSLTVQQAANSCANGQSVYCCNKTSNKPAGNSVGDGAGIANGLSLFSQCSKVDVNVIAIANNLLNKECQANAACCQDSPGTAAAGLVNAALPCVAISNLV.

A signal peptide spans 1-16; that stretch reads MYAYTVIAFLAASVAA. Disulfide bonds link Cys35–Cys97, Cys43–Cys91, Cys44–Cys72, and Cys98–Cys116.

Belongs to the fungal hydrophobin family.

It is found in the secreted. The protein resides in the cell wall. In terms of biological role, aerial growth, conidiation, and dispersal of filamentous fungi in the environment rely upon a capability of their secreting small amphipathic proteins called hydrophobins (HPBs) with low sequence identity. Class I can self-assemble into an outermost layer of rodlet bundles on aerial cell surfaces, conferring cellular hydrophobicity that supports fungal growth, development and dispersal; whereas Class II form highly ordered films at water-air interfaces through intermolecular interactions but contribute nothing to the rodlet structure. HYD1 and HYD2 are required for the structural integrity of the long aerial chains of microconidia. Does not seem to be important for the ability to cause seedling disease. The protein is Class I hydrophobin 2 of Gibberella moniliformis (Maize ear and stalk rot fungus).